A 514-amino-acid chain; its full sequence is Glutathione-binding protein GsiB (514 aa).

The N-terminal stretch at 1-27 is a signal peptide; it reads MSVMTIQRRWLVAAGVTAAMVASPVWA.

This sequence belongs to the bacterial solute-binding protein 5 family. In terms of assembly, the complex is composed of two ATP-binding proteins (GsiA), two transmembrane proteins (GsiC and GsiD) and a solute-binding protein (GsiB).

It is found in the periplasm. In terms of biological role, part of the ABC transporter complex GsiABCD involved in glutathione import. Binds glutathione. The polypeptide is Glutathione-binding protein GsiB (Pectobacterium atrosepticum (strain SCRI 1043 / ATCC BAA-672) (Erwinia carotovora subsp. atroseptica)).